Here is a 517-residue protein sequence, read N- to C-terminus: Bifunctional purine biosynthesis protein PurH (517 aa).

The MGS-like domain maps to 1-145 (MSPLALVSVS…KNHKYVSVLV (145 aa)).

This sequence belongs to the PurH family.

It carries out the reaction (6R)-10-formyltetrahydrofolate + 5-amino-1-(5-phospho-beta-D-ribosyl)imidazole-4-carboxamide = 5-formamido-1-(5-phospho-D-ribosyl)imidazole-4-carboxamide + (6S)-5,6,7,8-tetrahydrofolate. It catalyses the reaction IMP + H2O = 5-formamido-1-(5-phospho-D-ribosyl)imidazole-4-carboxamide. Its pathway is purine metabolism; IMP biosynthesis via de novo pathway; 5-formamido-1-(5-phospho-D-ribosyl)imidazole-4-carboxamide from 5-amino-1-(5-phospho-D-ribosyl)imidazole-4-carboxamide (10-formyl THF route): step 1/1. The protein operates within purine metabolism; IMP biosynthesis via de novo pathway; IMP from 5-formamido-1-(5-phospho-D-ribosyl)imidazole-4-carboxamide: step 1/1. The protein is Bifunctional purine biosynthesis protein PurH of Prochlorococcus marinus (strain MIT 9215).